The following is a 692-amino-acid chain: Elongation factor G (692 aa).

The region spanning 8–283 (EDYRNFGIMA…AVVDYLPSPV (276 aa)) is the tr-type G domain. Residues 17–24 (AHIDAGKT), 81–85 (DTPGH), and 135–138 (NKMD) each bind GTP.

It belongs to the TRAFAC class translation factor GTPase superfamily. Classic translation factor GTPase family. EF-G/EF-2 subfamily.

The protein resides in the cytoplasm. Catalyzes the GTP-dependent ribosomal translocation step during translation elongation. During this step, the ribosome changes from the pre-translocational (PRE) to the post-translocational (POST) state as the newly formed A-site-bound peptidyl-tRNA and P-site-bound deacylated tRNA move to the P and E sites, respectively. Catalyzes the coordinated movement of the two tRNA molecules, the mRNA and conformational changes in the ribosome. The sequence is that of Elongation factor G from Caulobacter vibrioides (strain ATCC 19089 / CIP 103742 / CB 15) (Caulobacter crescentus).